We begin with the raw amino-acid sequence, 231 residues long: Hypoxanthine-guanine-xanthine phosphoribosyltransferase (231 aa).

GMP contacts are provided by residues lysine 77, glutamate 144–threonine 152, lysine 176, and aspartate 204. Aspartate 148 (proton acceptor) is an active-site residue. Aspartate 204 is a binding site for Mg(2+).

Belongs to the purine/pyrimidine phosphoribosyltransferase family. In terms of assembly, homotetramer. Mg(2+) serves as cofactor.

The protein resides in the cytoplasm. It carries out the reaction IMP + diphosphate = hypoxanthine + 5-phospho-alpha-D-ribose 1-diphosphate. The catalysed reaction is GMP + diphosphate = guanine + 5-phospho-alpha-D-ribose 1-diphosphate. The enzyme catalyses XMP + diphosphate = xanthine + 5-phospho-alpha-D-ribose 1-diphosphate. It functions in the pathway purine metabolism; GMP biosynthesis via salvage pathway; GMP from guanine: step 1/1. It participates in purine metabolism; IMP biosynthesis via salvage pathway; IMP from hypoxanthine: step 1/1. Its pathway is purine metabolism; XMP biosynthesis via salvage pathway; XMP from xanthine: step 1/1. Its function is as follows. Catalyzes the transfer of a ribosyl phosphate group from 5-phosphoribose 1-diphosphate to the N(9) of hypoxanthine, guanine or xanthine, leading to IMP, GMP and XMP, respectively. Plays a central role in the generation of purine nucleotides through the purine salvage pathway. The polypeptide is Hypoxanthine-guanine-xanthine phosphoribosyltransferase (LACZ) (Plasmodium falciparum (isolate K1 / Thailand)).